The chain runs to 103 residues: Large ribosomal subunit protein uL24 (103 aa).

The protein belongs to the universal ribosomal protein uL24 family. In terms of assembly, part of the 50S ribosomal subunit.

Its function is as follows. One of two assembly initiator proteins, it binds directly to the 5'-end of the 23S rRNA, where it nucleates assembly of the 50S subunit. Functionally, one of the proteins that surrounds the polypeptide exit tunnel on the outside of the subunit. This Ruegeria pomeroyi (strain ATCC 700808 / DSM 15171 / DSS-3) (Silicibacter pomeroyi) protein is Large ribosomal subunit protein uL24.